Here is a 94-residue protein sequence, read N- to C-terminus: Integration host factor subunit beta (94 aa).

The protein belongs to the bacterial histone-like protein family. As to quaternary structure, heterodimer of an alpha and a beta chain.

This protein is one of the two subunits of integration host factor, a specific DNA-binding protein that functions in genetic recombination as well as in transcriptional and translational control. The sequence is that of Integration host factor subunit beta from Xanthobacter autotrophicus (strain ATCC BAA-1158 / Py2).